The sequence spans 158 residues: Protein-export protein SecB (158 aa).

This sequence belongs to the SecB family. In terms of assembly, homotetramer, a dimer of dimers. One homotetramer interacts with 1 SecA dimer.

The protein resides in the cytoplasm. In terms of biological role, one of the proteins required for the normal export of preproteins out of the cell cytoplasm. It is a molecular chaperone that binds to a subset of precursor proteins, maintaining them in a translocation-competent state. It also specifically binds to its receptor SecA. The sequence is that of Protein-export protein SecB from Pectobacterium atrosepticum (strain SCRI 1043 / ATCC BAA-672) (Erwinia carotovora subsp. atroseptica).